The primary structure comprises 88 residues: Putative membrane protein insertion efficiency factor (88 aa).

Belongs to the UPF0161 family.

The protein resides in the cell inner membrane. Could be involved in insertion of integral membrane proteins into the membrane. This Coxiella burnetii (strain Dugway 5J108-111) protein is Putative membrane protein insertion efficiency factor.